The chain runs to 265 residues: uncharacterized protein (265 aa).

A Phosphoserine modification is found at S223.

This is an uncharacterized protein from Saccharomyces cerevisiae (strain ATCC 204508 / S288c) (Baker's yeast).